We begin with the raw amino-acid sequence, 306 residues long: Glutaminase (306 aa).

Positions 64, 115, 159, 166, 190, 242, and 260 each coordinate substrate.

This sequence belongs to the glutaminase family. Homotetramer.

The catalysed reaction is L-glutamine + H2O = L-glutamate + NH4(+). In Vibrio cholerae serotype O1 (strain ATCC 39541 / Classical Ogawa 395 / O395), this protein is Glutaminase.